Consider the following 421-residue polypeptide: eIF5-mimic protein 1 (421 aa).

A disordered region spans residues 1 to 24 (MNTGKQQKPVLTGQRFKTRKRDEK). One can recognise a W2 domain in the interval 250 to 417 (TQQTLGTRKE…QNAEEESESE (168 aa)).

Belongs to the BZW family.

It localises to the cytoplasm. Its function is as follows. Translation initiation regulator which may repress non-AUG initiated translation and repeat-associated non-AUG (RAN) initiated translation by acting as a competitive inhibitor of eukaryotic translation initiation factor 5 (EIF5) function. The polypeptide is eIF5-mimic protein 1 (bzw2) (Danio rerio (Zebrafish)).